Consider the following 481-residue polypeptide: Proline--tRNA ligase (481 aa).

This sequence belongs to the class-II aminoacyl-tRNA synthetase family. ProS type 3 subfamily. In terms of assembly, homodimer.

The protein resides in the cytoplasm. It catalyses the reaction tRNA(Pro) + L-proline + ATP = L-prolyl-tRNA(Pro) + AMP + diphosphate. Functionally, catalyzes the attachment of proline to tRNA(Pro) in a two-step reaction: proline is first activated by ATP to form Pro-AMP and then transferred to the acceptor end of tRNA(Pro). This is Proline--tRNA ligase from Saccharolobus islandicus (strain Y.N.15.51 / Yellowstone #2) (Sulfolobus islandicus).